Reading from the N-terminus, the 215-residue chain is MTAFKRVLIAMISALLAGTTGMFVSAGAAHAGLDNELSLVDGQDRTLTVQQWDTFLNGVFPLDRNRLTREWFHSGRAKYIVAGPGADEFEGTLELGYQIGFPWSLGVGINFSYTTPNILIDDGDITAPPFGLNSVITPNLFPGVSISADLGNGPGIQEVATFSVDVSGPAGGVAVSNAHGTVTGAAGGVLLRPFARLIASTGDSVTTYGEPWNMN.

Residues 1–31 (MTAFKRVLIAMISALLAGTTGMFVSAGAAHA) form the signal peptide.

It belongs to the mycobacterial porin (TC 1.B.24) family. As to quaternary structure, octamers. Probably forms a goblet with the wide end on the exterior of the outer membrane and a central channel. It is not known if mixed oligomers of MspB with other Msp subunits form in vivo.

It localises to the cell outer membrane. The protein resides in the secreted. It is found in the cell wall. Functionally, a backup porin induced when MspA, the major porin, is deleted. Probably forms a water-filled channel which favors the permeation of cations. There are about 2400 porins in wild-type, 800 in an mspA deletion and 150 in a double mspA-mspC deletion. A triple mspA-mspC-mspD deletion mutant has low but detectable channel activity. Different conductance values with maxima at 2.3 and 4.6 nanosiemens might be caused by a simultaneous reconstitution of MspB channels into the membrane or by the existence of different MspB conformations. This is Porin MspB (mspB) from Mycolicibacterium smegmatis (strain ATCC 700084 / mc(2)155) (Mycobacterium smegmatis).